Here is a 2325-residue protein sequence, read N- to C-terminus: Centriolin (2325 aa).

The interval 1 to 33 is disordered; sequence MKKGSQQKIFSKAKIPSSSHSPIPSSMSNMRSR. Residues 16-33 show a composition bias toward low complexity; the sequence is PSSSHSPIPSSMSNMRSR. LRR repeat units lie at residues 126-147, 148-169, 170-191, and 194-215; these read KLEV…DKLL, KLRE…ENMC, NLQK…LGKK, and SLRV…SKLK. An LRRCT domain is found at 228 to 266; that stretch reads NPVVTLPHYLQFTIFHLRSLESLEGQPVTTQDRQEAFER. Coiled-coil stretches lie at residues 267-343 and 435-799; these read FSLE…IELT and LDTQ…LNHV. Position 831 is a phosphoserine (S831). Residues 851-1101 are a coiled coil; it reads LARSKWERDE…ARLQNVLDLT (251 aa). The tract at residues 1150 to 1241 is disordered; that stretch reads PSSKVSSHSS…DQEEPPFVPP (92 aa). The span at 1224 to 1235 shows a compositional bias: acidic residues; it reads SQEESELDDQEE. A coiled-coil region spans residues 1317–2255; sequence EHHNLENEVS…DRLKAQLRHC (939 aa). At S1475 the chain carries Phosphoserine. The tract at residues 1948–2118 is required for centrosome localization; that stretch reads MMFQRLQKER…ELVAQDNHER (171 aa). Residues 1985–2325 form a sufficient for interaction with HOOK2 region; that stretch reads QKSKLDQVLS…QNQEKNASAR (341 aa). Residues 2288 to 2325 are disordered; sequence VTSTSADSASSPSLSQLESSLTEDSQLGQNQEKNASAR. Residues 2290–2314 are compositionally biased toward low complexity; the sequence is STSADSASSPSLSQLESSLTEDSQL. The span at 2315–2325 shows a compositional bias: polar residues; sequence GQNQEKNASAR.

In terms of assembly, interacts with HOOK2. Interacts with EXOC6 and SNAPIN. Associates with the exocyst complex. As to expression, widely expressed with highest levels in testis and trachea.

The protein resides in the cytoplasm. Its subcellular location is the cytoskeleton. It localises to the microtubule organizing center. The protein localises to the centrosome. It is found in the midbody. The protein resides in the midbody ring. Functionally, involved in cell cycle progression and cytokinesis. During the late steps of cytokinesis, anchors exocyst and SNARE complexes at the midbody, thereby allowing secretory vesicle-mediated abscission. The chain is Centriolin (CNTRL) from Homo sapiens (Human).